The primary structure comprises 268 residues: Interleukin-2 receptor subunit alpha (268 aa).

The N-terminal stretch at 1-21 is a signal peptide; the sequence is MEPCLLMWGILTFITVSGYTT. Residues 22-81 form the Sushi 1 domain; it reads DLCDDDPPNLKHATFKALTYKTGTVLNCDCERGFRRISSYMHCTGNSSHASWENKCRCKS. Over 22 to 237 the chain is Extracellular; sequence DLCDDDPPNL…ESFIFTTEYQ (216 aa). 3 disulfide bridges follow: C24–C64, C49–C77, and C51–C79. An N-linked (GlcNAc...) asparagine glycan is attached at N67. A disordered region spans residues 83-112; the sequence is SPENRKGKVTTKPEEQKGENPTEMQSQTPP. The segment covering 85–102 has biased composition (basic and acidic residues); it reads ENRKGKVTTKPEEQKGEN. The Sushi 2 domain occupies 120-183; the sequence is GHCREPPPWE…WTQPPLKCIS (64 aa). Cystine bridges form between C122/C165 and C149/C181. Positions 186-213 are disordered; it reads QFPDDEELQASTDAPAGRDTSSPFITTS. The span at 204–213 shows a compositional bias: polar residues; sequence DTSSPFITTS. Residues 238-258 traverse the membrane as a helical segment; it reads IAVASCVLLLISIVLLSGLTW. Over 259 to 268 the chain is Cytoplasmic; the sequence is QRRRRKSRTI.

In terms of assembly, non-covalent dimer of an alpha and a beta subunit. IL2R exists in 3 different forms: a high affinity dimer, an intermediate affinity monomer (beta subunit), and a low affinity monomer (alpha subunit). The high and intermediate affinity forms also associate with a gamma subunit.

The protein resides in the membrane. In terms of biological role, receptor for interleukin-2. The receptor is involved in the regulation of immune tolerance by controlling regulatory T cells (TREGs) activity. TREGs suppress the activation and expansion of autoreactive T-cells. This Canis lupus familiaris (Dog) protein is Interleukin-2 receptor subunit alpha (IL2RA).